A 96-amino-acid polypeptide reads, in one-letter code: Conotoxin Mr15.1 (96 aa).

Residues 1-20 (MSTLKMMLLILLLLLPLATF) form the signal peptide. Residues 21 to 57 (DSDGQAIPGGGIPSAVNSRVGRLLGGDEKSGRSLEKR) constitute a propeptide that is removed on maturation.

Belongs to the conotoxin N superfamily. Post-translationally, contains 4 disulfide bonds. As to expression, expressed by the venom duct.

The protein resides in the secreted. The protein is Conotoxin Mr15.1 of Conus marmoreus (Marble cone).